The following is an 88-amino-acid chain: Small ribosomal subunit protein bS20 (88 aa).

This sequence belongs to the bacterial ribosomal protein bS20 family.

Binds directly to 16S ribosomal RNA. The sequence is that of Small ribosomal subunit protein bS20 from Natranaerobius thermophilus (strain ATCC BAA-1301 / DSM 18059 / JW/NM-WN-LF).